A 1025-amino-acid chain; its full sequence is Multidrug resistance protein MdtC (1025 aa).

The next 12 membrane-spanning stretches (helical) occupy residues 15–35 (ILIS…LPVA), 333–353 (EVEQ…FLFL), 360–380 (LIPA…MYLC), 387–407 (LSLM…IVVL), 431–451 (VGFT…PLLL), 469–489 (VAIG…CGWL), 528–548 (LTGL…ISIP), 851–871 (AQVI…GMLY), 875–895 (VHPL…LLAL), 897–917 (IFDA…IGIV), 953–973 (PIMM…LSGG), and 984–1004 (ITIV…TPVV).

This sequence belongs to the resistance-nodulation-cell division (RND) (TC 2.A.6) family. MdtC subfamily. Part of a tripartite efflux system composed of MdtA, MdtB and MdtC. MdtC forms a heteromultimer with MdtB.

The protein resides in the cell inner membrane. This chain is Multidrug resistance protein MdtC, found in Klebsiella pneumoniae (strain 342).